Consider the following 132-residue polypeptide: Myelin P2 protein (132 aa).

An N-acetylserine modification is found at Ser-2. (9Z)-octadecenoate contacts are provided by residues Arg-107 and 127-129 (RIY). Hexadecanoate-binding positions include Arg-107 and 127 to 129 (RIY).

The protein belongs to the calycin superfamily. Fatty-acid binding protein (FABP) family. In terms of assembly, monomer.

The protein localises to the cytoplasm. May play a role in lipid transport protein in Schwann cells. May bind cholesterol. The sequence is that of Myelin P2 protein (Pmp2) from Mus musculus (Mouse).